A 201-amino-acid chain; its full sequence is ATP-dependent Clp protease proteolytic subunit 2 (201 aa).

The active-site Nucleophile is the S101. H126 is an active-site residue.

Belongs to the peptidase S14 family. As to quaternary structure, fourteen ClpP subunits assemble into 2 heptameric rings which stack back to back to give a disk-like structure with a central cavity, resembling the structure of eukaryotic proteasomes.

Its subcellular location is the cytoplasm. The enzyme catalyses Hydrolysis of proteins to small peptides in the presence of ATP and magnesium. alpha-casein is the usual test substrate. In the absence of ATP, only oligopeptides shorter than five residues are hydrolyzed (such as succinyl-Leu-Tyr-|-NHMec, and Leu-Tyr-Leu-|-Tyr-Trp, in which cleavage of the -Tyr-|-Leu- and -Tyr-|-Trp bonds also occurs).. In terms of biological role, cleaves peptides in various proteins in a process that requires ATP hydrolysis. Has a chymotrypsin-like activity. Plays a major role in the degradation of misfolded proteins. The chain is ATP-dependent Clp protease proteolytic subunit 2 from Prochlorococcus marinus subsp. pastoris (strain CCMP1986 / NIES-2087 / MED4).